Reading from the N-terminus, the 307-residue chain is Putative S-adenosyl-L-methionine-dependent methyltransferase Mflv_5025 (307 aa).

Residues Asp130 and 159–160 (DL) each bind S-adenosyl-L-methionine.

The protein belongs to the UPF0677 family.

Its function is as follows. Exhibits S-adenosyl-L-methionine-dependent methyltransferase activity. The chain is Putative S-adenosyl-L-methionine-dependent methyltransferase Mflv_5025 from Mycolicibacterium gilvum (strain PYR-GCK) (Mycobacterium gilvum (strain PYR-GCK)).